The primary structure comprises 149 residues: Large ribosomal subunit protein uL13 (149 aa).

It belongs to the universal ribosomal protein uL13 family. As to quaternary structure, part of the 50S ribosomal subunit.

Its function is as follows. This protein is one of the early assembly proteins of the 50S ribosomal subunit, although it is not seen to bind rRNA by itself. It is important during the early stages of 50S assembly. The sequence is that of Large ribosomal subunit protein uL13 from Chlorobium phaeobacteroides (strain DSM 266 / SMG 266 / 2430).